The sequence spans 292 residues: MKILVPATSANLGPGFDCLGLSLKYFNQTIVEKSKFFSISIHGEGENNIYLKKNNSFVNIFYEIYQRLSGKKDNFRFVFQNNIPLARGMGSSSAVIIGAIACAYELSGFKADKNTILNEALKYENHPDNIAPAALGGFVCALTHNEKVLAIKKEVDKDLQAVITIPNVAMNTQKSRAVLAKKINLEDGVFNLCHASFLTACFLEKKYDLLKYASLDKLHQNQRMKLLPELFEVQKLALDNNALMSTLSGSGSSFFTLAYKDDAKKIKEKIKNKFAKFRVELLEFDDEGFKIC.

ATP is bound at residue 84 to 94 (PLARGMGSSSA).

Belongs to the GHMP kinase family. Homoserine kinase subfamily.

Its subcellular location is the cytoplasm. The enzyme catalyses L-homoserine + ATP = O-phospho-L-homoserine + ADP + H(+). Its pathway is amino-acid biosynthesis; L-threonine biosynthesis; L-threonine from L-aspartate: step 4/5. Its function is as follows. Catalyzes the ATP-dependent phosphorylation of L-homoserine to L-homoserine phosphate. The protein is Homoserine kinase of Campylobacter lari (strain RM2100 / D67 / ATCC BAA-1060).